The sequence spans 373 residues: StAR-related lipid transfer protein 7, mitochondrial (373 aa).

A mitochondrion-targeting transit peptide spans 1–61 (MFPRRPPATL…YSESSRCALL (61 aa)). The stretch at 89–114 (DEERIQEEELQRSINEMKRLEEMSNI) forms a coiled coil. The region spanning 115–330 (FQSSGVENYP…LHMATLKAKN (216 aa)) is the START domain. Disordered regions lie at residues 118-141 (SGVENYPPEPKSPAGGNEKSKDKE) and 347-373 (SSEAKATAPSPERKNEGSCGPARIEYA).

Proteolytically cleaved by PARL. Expressed in epithelial cells of airways, peripheral bronchioles and alveoli, as well as in the basal cell layer of the epidermis (at protein level).

The protein resides in the mitochondrion. May play a protective role in mucosal tissues by preventing exaggerated allergic responses. The sequence is that of StAR-related lipid transfer protein 7, mitochondrial (Stard7) from Mus musculus (Mouse).